The primary structure comprises 751 residues: Dual specificity tyrosine-phosphorylation-regulated kinase 1A (751 aa).

The span at 59–68 (YNDQIQQPLP) shows a compositional bias: polar residues. Disordered stretches follow at residues 59–81 (YNDQ…RDPA) and 104–129 (YAKK…KVYN). A Bipartite nuclear localization signal motif is present at residues 109 to 126 (RRHQQGQGDDSSHKKERK). The 321-residue stretch at 151–471 (YEIDSLIGKG…PYYALQHSFF (321 aa)) folds into the Protein kinase domain. Residues 157–165 (IGKGSFGQV), lysine 180, and 230–233 (FEML) each bind ATP. Catalysis depends on aspartate 279, which acts as the Proton acceptor. A compositionally biased stretch (polar residues) spans 477–493 (EGTNTSNSVSTSPAMEQ). Disordered regions lie at residues 477–532 (EGTN…HSGG), 580–667 (HVPS…GNQA), and 730–751 (GMDR…VASS). A compositionally biased stretch (low complexity) spans 494–517 (SQSSGTTSSTSSSSGGSSGTSNSG). The interval 585–613 (QQNVPHHHGNGSHHHHHHHHHHHGQHVLS) is histidine-rich domain (HRD). The span at 589-609 (PHHHGNGSHHHHHHHHHHHGQ) shows a compositional bias: basic residues. The span at 611 to 622 (VLSNRTRTRIYN) shows a compositional bias: polar residues. 2 stretches are compositionally biased toward low complexity: residues 623-633 (SPSTSSSTQDS) and 642-660 (SMTS…SSST). The span at 742 to 751 (CVQQSPVASS) shows a compositional bias: polar residues.

The protein belongs to the protein kinase superfamily. CMGC Ser/Thr protein kinase family. MNB/DYRK subfamily. Autophosphorylated on tyrosine residues.

It localises to the nucleus. The protein localises to the nucleus speckle. The enzyme catalyses L-seryl-[protein] + ATP = O-phospho-L-seryl-[protein] + ADP + H(+). It catalyses the reaction L-threonyl-[protein] + ATP = O-phospho-L-threonyl-[protein] + ADP + H(+). It carries out the reaction L-tyrosyl-[protein] + ATP = O-phospho-L-tyrosyl-[protein] + ADP + H(+). The catalysed reaction is [DNA-directed RNA polymerase] + ATP = phospho-[DNA-directed RNA polymerase] + ADP + H(+). Dual-specificity kinase which possesses both serine/threonine and tyrosine kinase activities. Exhibits a substrate preference for proline at position P+1 and arginine at position P-3. Plays an important role in double-strand breaks (DSBs) repair following DNA damage. Mechanistically, phosphorylates RNF169 and increases its ability to block accumulation of TP53BP1 at the DSB sites thereby promoting homologous recombination repair (HRR). Also acts as a positive regulator of transcription by acting as a CTD kinase that mediates phosphorylation of the CTD (C-terminal domain) of the large subunit of RNA polymerase II (RNAP II) POLR2A. Modulates alternative splicing by phosphorylating the splice factor SRSF6. Phosphorylates SEPTIN4, SEPTIN5 and SF3B1. This Xenopus tropicalis (Western clawed frog) protein is Dual specificity tyrosine-phosphorylation-regulated kinase 1A.